The chain runs to 459 residues: MFS-type transporter SLC18B1 (459 aa).

Position 1 is an N-acetylmethionine (Met1). Residues 1–10 are compositionally biased toward low complexity; the sequence is MDEAGSPAPA. Positions 1-27 are disordered; the sequence is MDEAGSPAPAGTGGGDDPGGSTRETSR. Over 1 to 33 the chain is Cytoplasmic; that stretch reads MDEAGSPAPAGTGGGDDPGGSTRETSRRLSREQ. A Phosphoserine modification is found at Ser21. Residues 34 to 54 traverse the membrane as a helical segment; that stretch reads IFVLVSAASMNLGCMMTYSIL. Over 55–70 the chain is Extracellular; that stretch reads GPFFPKEAEKKGASNT. The chain crosses the membrane as a helical span at residues 71–91; it reads MIGMIFGCYALFELLASLVFG. Topologically, residues 92–100 are cytoplasmic; it reads KYLVHIGAK. Residues 101-121 form a helical membrane-spanning segment; that stretch reads FMFIAGMFVSGGVTILFGVLD. Over 122–127 the chain is Extracellular; that stretch reads QLPEGP. The chain crosses the membrane as a helical span at residues 128-148; the sequence is IFIAMCFLVRIVDAIGFGAAI. Residues 149–167 lie on the Cytoplasmic side of the membrane; sequence TASSSILAKAFPNNVATVM. The chain crosses the membrane as a helical span at residues 168–188; that stretch reads GSLEVFSGLGLVAGPPLGGLL. Residues 189–195 are Extracellular-facing; sequence YQSFGYE. A helical transmembrane segment spans residues 196–216; the sequence is VPFIFLGCIVLLMIPLNLYIL. The Cytoplasmic portion of the chain corresponds to 217 to 235; it reads PSYAQESDPGKQSFWKLVT. Residues 236 to 256 traverse the membrane as a helical segment; the sequence is LPKMGLLAFVIISLSSCFGFL. The Extracellular segment spans residues 257–274; the sequence is DPTLSLFVMEKFSLSTGY. A helical membrane pass occupies residues 275–295; sequence VGLVFLGLSLSYAISSPLFGL. Residues 296-306 are Cytoplasmic-facing; that stretch reads LSDKMPTLRKW. The chain crosses the membrane as a helical span at residues 307–327; the sequence is LLVFGNLITAGCYMLLGPVPL. The Extracellular portion of the chain corresponds to 328–333; sequence LHIKSQ. The chain crosses the membrane as a helical span at residues 334-354; the sequence is LWLLVLVLVVNGISAGMSIIP. Topologically, residues 355 to 379 are cytoplasmic; it reads TFPEMLSCAYANGFEDSISTLGLVS. The chain crosses the membrane as a helical span at residues 380–400; it reads GLFGAMWSVGAFMGPILGGFL. The Extracellular portion of the chain corresponds to 401–409; sequence CEKIGFEWA. Residues 410 to 430 traverse the membrane as a helical segment; the sequence is AAMQGLWTLLSGVSMALFYLW. Topologically, residues 431 to 459 are cytoplasmic; sequence EDSTARRRSKAQNSLGTEEERAALLPNDT. The tract at residues 440–459 is disordered; sequence KAQNSLGTEEERAALLPNDT.

This sequence belongs to the major facilitator superfamily. Widely expressed, with highest expression in the lung, pancreas and kidney. High expression in the CNS, particularly in the hypothalamus, the thalamus and the cerebellum. In the forebrain, abundantly expressed in the telencephalon, especially in the cerebral cortex layers, except layer 1, as well as in the induseum griseum, the piriform area, the taenia tecta, dorsal part and in the entorhinal area, lateral part. Lower levels in the bed anterior olfactory nucleus, posteroventral part and in layer two of the olfactory tubercle. In the amygdala, high levels observed in the intercalated nucleus and the medial nucleus. In the diencephalon, expressed in the nuclei in both the hypothalamus and thalamus. Among the hypothalamic areas, strongest expression in the arcuate nucleus and in the ventromedial nucleus, as well as in the suprachiasmatic nucleus, anterior nucleus, especially in its central part, and in the magnocellular division of the paraventricular nucleus. In the thalamus, highest levels in the medial habenula. Expression also observed in the paraventricular thalamic nucleus, parataenial nucleus, central medial nucleus, intermediodorsal nucleus and lateral dorsal nucleus. In the hindbrain, detected in the cerebellum and in the pons. In the midbrain and the medulla, expression levels were modest. In the midbrain, highest expression in the periaqueductal gray and all subdivisions of the interpeduncular nucleus, except for the caudal part. In the pons, the strongest labeling was seen in the nucleus incertus and in the tegmental nucleus. Expressed in bone marrow-derived mast cells (at protein level).

The protein resides in the cytoplasmic vesicle. It is found in the secretory vesicle membrane. It localises to the secretory vesicle. The protein localises to the synaptic vesicle membrane. The catalysed reaction is spermine(in) + n H(+)(out) = spermine(out) + n H(+)(in). It catalyses the reaction spermidine(in) + n H(+)(out) = spermidine(out) + n H(+)(in). The enzyme catalyses serotonin(in) + n H(+)(out) = serotonin(out) + n H(+)(in). In terms of biological role, proton-coupled polyamine antiporter involved in the translocation of polyamines from cytosol into secretory vesicles prior to their release via exocytosis. Uses the electrochemical proton gradient generated by a V-type proton-pumping ATPase to couple the efflux of protons with the uptake of a polyamine molecule. Facilitates vesicular storage of spermine and spermidine in astrocytes with an impact on glutamatergic neuronal transmission and memory formation. Upon antigen stimulation, regulates polyamine accumulation and release in mast cell secretory granules, which in turn potentiates mast cell degranulation and histamine secretion. The protein is MFS-type transporter SLC18B1 of Mus musculus (Mouse).